Consider the following 342-residue polypeptide: Tetraacyldisaccharide 4'-kinase (342 aa).

56–63 (TAGGAGKT) contributes to the ATP binding site.

This sequence belongs to the LpxK family.

The enzyme catalyses a lipid A disaccharide + ATP = a lipid IVA + ADP + H(+). Its pathway is glycolipid biosynthesis; lipid IV(A) biosynthesis; lipid IV(A) from (3R)-3-hydroxytetradecanoyl-[acyl-carrier-protein] and UDP-N-acetyl-alpha-D-glucosamine: step 6/6. In terms of biological role, transfers the gamma-phosphate of ATP to the 4'-position of a tetraacyldisaccharide 1-phosphate intermediate (termed DS-1-P) to form tetraacyldisaccharide 1,4'-bis-phosphate (lipid IVA). The protein is Tetraacyldisaccharide 4'-kinase of Parvibaculum lavamentivorans (strain DS-1 / DSM 13023 / NCIMB 13966).